A 219-amino-acid chain; its full sequence is Germin-like protein subfamily 2 member 1 (219 aa).

The N-terminal stretch at 1 to 21 (MASPTLTLLLLLTTVSFFISS) is a signal peptide. Cysteines 32 and 47 form a disulfide. Positions 61-209 (QGLAKPGLTN…AFQTSPGTVK (149 aa)) constitute a Cupin type-1 domain. N-linked (GlcNAc...) asparagine glycosylation occurs at N70. Residues H109, H111, E116, and H155 each contribute to the Mn(2+) site.

Belongs to the germin family. As to quaternary structure, oligomer (believed to be a pentamer but probably hexamer).

The protein localises to the secreted. It localises to the extracellular space. The protein resides in the apoplast. Functionally, may play a role in plant defense. Probably has no oxalate oxidase activity even if the active site is conserved. This chain is Germin-like protein subfamily 2 member 1 (GLP4), found in Arabidopsis thaliana (Mouse-ear cress).